A 320-amino-acid polypeptide reads, in one-letter code: Transcription factor NAI1 (320 aa).

The segment at 53 to 105 is disordered; the sequence is TKQMKTNNNMNSTSSSPSSSSSSGSRTSQVISFGSPDTKTNPVETSLNFSNQV. Residues 58–80 are compositionally biased toward low complexity; it reads TNNNMNSTSSSPSSSSSSGSRTS. The segment covering 81–105 has biased composition (polar residues); that stretch reads QVISFGSPDTKTNPVETSLNFSNQV. The region spanning 128 to 177 is the bHLH domain; sequence HLLKEHVLAERKRRQKLNERLIALSALLPGLKKTDKATVLEDAIKHLKQL.

Homodimer. Expressed constitutively in roots, leaves, stems, and flowers.

Its subcellular location is the nucleus. Transcription activator that regulates the expression of at least NAI2, PYK10 and PBP1. Required for and mediates the formation of endoplasmic reticulum bodies (ER bodies). Involved in the symbiotic interactions with the endophytes of the Sebacinaceae fungus family, such as Piriformospora indica and Sebacina. The protein is Transcription factor NAI1 (NAI1) of Arabidopsis thaliana (Mouse-ear cress).